The primary structure comprises 417 residues: Tyrosine--tRNA ligase (417 aa).

Residue Y39 participates in L-tyrosine binding. Residues 44–53 (PTAASLHAGG) carry the 'HIGH' region motif. L-tyrosine is bound by residues Y176 and Q180. The 'KMSKS' region signature appears at 236 to 240 (KMGKS). K239 serves as a coordination point for ATP. The 68-residue stretch at 350-417 (LGLLTLLVRA…KKKHLLVRPV (68 aa)) folds into the S4 RNA-binding domain.

This sequence belongs to the class-I aminoacyl-tRNA synthetase family. TyrS type 1 subfamily. As to quaternary structure, homodimer.

Its subcellular location is the cytoplasm. It carries out the reaction tRNA(Tyr) + L-tyrosine + ATP = L-tyrosyl-tRNA(Tyr) + AMP + diphosphate + H(+). In terms of biological role, catalyzes the attachment of tyrosine to tRNA(Tyr) in a two-step reaction: tyrosine is first activated by ATP to form Tyr-AMP and then transferred to the acceptor end of tRNA(Tyr). The protein is Tyrosine--tRNA ligase of Rhizobium meliloti (strain 1021) (Ensifer meliloti).